A 213-amino-acid chain; its full sequence is 2-dehydro-3-deoxy-phosphogluconate aldolase (213 aa).

Catalysis depends on glutamate 45, which acts as the Proton acceptor. The pyruvate site is built by arginine 49, threonine 73, and lysine 133. Catalysis depends on lysine 133, which acts as the Schiff-base intermediate with substrate.

Belongs to the KHG/KDPG aldolase family. Homotrimer.

Its subcellular location is the cytoplasm. The enzyme catalyses 2-dehydro-3-deoxy-6-phospho-D-gluconate = D-glyceraldehyde 3-phosphate + pyruvate. The protein operates within carbohydrate acid metabolism; 2-dehydro-3-deoxy-D-gluconate degradation; D-glyceraldehyde 3-phosphate and pyruvate from 2-dehydro-3-deoxy-D-gluconate: step 2/2. In terms of biological role, involved in the degradation of glucose via the Entner-Doudoroff pathway. Catalyzes the reversible, stereospecific retro-aldol cleavage of 2-keto-3-deoxy-6-phosphogluconate (KDPG) to pyruvate and D-glyceraldehyde-3-phosphate. This is 2-dehydro-3-deoxy-phosphogluconate aldolase (eda) from Dickeya dadantii (strain 3937) (Erwinia chrysanthemi (strain 3937)).